The chain runs to 357 residues: Homoserine O-acetyltransferase (357 aa).

The 290-residue stretch at 51 to 340 (NVIVICHALT…EPYGHDAFLI (290 aa)) folds into the AB hydrolase-1 domain. Ser147 acts as the Nucleophile in catalysis. Arg216 contributes to the substrate binding site. Catalysis depends on residues Asp306 and His335. Asp336 is a substrate binding site.

It belongs to the AB hydrolase superfamily. MetX family. Homodimer.

Its subcellular location is the cytoplasm. The catalysed reaction is L-homoserine + acetyl-CoA = O-acetyl-L-homoserine + CoA. Its pathway is amino-acid biosynthesis; L-methionine biosynthesis via de novo pathway; O-acetyl-L-homoserine from L-homoserine: step 1/1. In terms of biological role, transfers an acetyl group from acetyl-CoA to L-homoserine, forming acetyl-L-homoserine. This is Homoserine O-acetyltransferase from Chlorobium chlorochromatii (strain CaD3).